Reading from the N-terminus, the 82-residue chain is ATP synthase subunit c (82 aa).

2 helical membrane-spanning segments follow: residues 6–26 (AAAS…GPGI) and 57–77 (LAFM…LLFA).

It belongs to the ATPase C chain family. In terms of assembly, F-type ATPases have 2 components, F(1) - the catalytic core - and F(0) - the membrane proton channel. F(1) has five subunits: alpha(3), beta(3), gamma(1), delta(1), epsilon(1). F(0) has four main subunits: a(1), b(1), b'(1) and c(10-14). The alpha and beta chains form an alternating ring which encloses part of the gamma chain. F(1) is attached to F(0) by a central stalk formed by the gamma and epsilon chains, while a peripheral stalk is formed by the delta, b and b' chains.

Its subcellular location is the cell inner membrane. Its function is as follows. F(1)F(0) ATP synthase produces ATP from ADP in the presence of a proton or sodium gradient. F-type ATPases consist of two structural domains, F(1) containing the extramembraneous catalytic core and F(0) containing the membrane proton channel, linked together by a central stalk and a peripheral stalk. During catalysis, ATP synthesis in the catalytic domain of F(1) is coupled via a rotary mechanism of the central stalk subunits to proton translocation. In terms of biological role, key component of the F(0) channel; it plays a direct role in translocation across the membrane. A homomeric c-ring of between 10-14 subunits forms the central stalk rotor element with the F(1) delta and epsilon subunits. In Gloeobacter violaceus (strain ATCC 29082 / PCC 7421), this protein is ATP synthase subunit c.